The chain runs to 365 residues: TD and POZ domain-containing protein 1 (365 aa).

Residues 19–149 form the MATH domain; that stretch reads KFCYKWTISN…EDQLTICCKV (131 aa). Residues 188–250 form the BTB domain; it reads TDCCLLVAGH…EMMGFIYTGK (63 aa).

The protein belongs to the Tdpoz family.

In Mus musculus (Mouse), this protein is TD and POZ domain-containing protein 1.